Consider the following 260-residue polypeptide: Acyl-coenzyme A diphosphatase FITM2 (260 aa).

The Cytoplasmic segment spans residues Met1–His23. Residues Cys24–Leu44 form a helical membrane-spanning segment. Residues Pro45–Asn57 lie on the Lumenal side of the membrane. The helical transmembrane segment at Val58–Leu78 threads the bilayer. Residues Thr79–Arg93 are Cytoplasmic-facing. The helical transmembrane segment at Leu94–Ile114 threads the bilayer. Residues Glu115–Gly144 lie on the Lumenal side of the membrane. The helical transmembrane segment at Phe145–Ile165 threads the bilayer. His154 is a catalytic residue. At Leu166–Gln189 the chain is on the cytoplasmic side. Transmembrane regions (helical) follow at residues Phe190–Tyr210 and Phe211–Thr231. Residue His212 is part of the active site. Residues Tyr232–Asn260 are Cytoplasmic-facing.

The protein belongs to the FIT family. FIT2 subfamily.

It is found in the endoplasmic reticulum membrane. The enzyme catalyses an acyl-CoA + H2O = an acyl-4'-phosphopantetheine + adenosine 3',5'-bisphosphate + 2 H(+). In terms of biological role, fatty acyl-coenzyme A (CoA) diphosphatase that hydrolyzes fatty acyl-CoA to yield acyl-4'-phosphopantetheine and adenosine 3',5'-bisphosphate. Preferentially hydrolyzes unsaturated long-chain acyl-CoA substrates in the endoplasmic reticulum (ER) lumen. This catalytic activity is required for maintaining ER structure and for lipid droplets (LDs) biogenesis, which are lipid storage organelles involved in maintaining lipid and energy homeostasis. May directly bind to diacylglycerol (DAGs) and triacylglycerol, which is also important for LD biogenesis. May support directional budding of nacent LDs from the ER into the cytosol by reducing DAG levels at sites of LD formation. May play a role in the regulation of cell morphology, ER morphology and cytoskeletal organization. The sequence is that of Acyl-coenzyme A diphosphatase FITM2 from Xenopus laevis (African clawed frog).